We begin with the raw amino-acid sequence, 299 residues long: Glycine--tRNA ligase alpha subunit (299 aa).

The protein belongs to the class-II aminoacyl-tRNA synthetase family. As to quaternary structure, tetramer of two alpha and two beta subunits.

It localises to the cytoplasm. The catalysed reaction is tRNA(Gly) + glycine + ATP = glycyl-tRNA(Gly) + AMP + diphosphate. The chain is Glycine--tRNA ligase alpha subunit from Laribacter hongkongensis (strain HLHK9).